The following is a 567-amino-acid chain: Septation ring formation regulator EzrA (567 aa).

At 1 to 2 the chain is on the extracellular side; that stretch reads MG. The helical transmembrane segment at 3 to 21 threads the bilayer; the sequence is MAWIVLLLGAGAIIYNHVY. Residues 22-567 lie on the Cytoplasmic side of the membrane; sequence RKRMYREIDR…LWQEDNSREQ (546 aa). Coiled coils occupy residues 98 to 159 and 251 to 497; these read YRQA…AYRY and HMER…IEQA.

It belongs to the EzrA family.

It localises to the cell membrane. In terms of biological role, negative regulator of FtsZ ring formation; modulates the frequency and position of FtsZ ring formation. Inhibits FtsZ ring formation at polar sites. Interacts either with FtsZ or with one of its binding partners to promote depolymerization. The protein is Septation ring formation regulator EzrA of Geobacillus kaustophilus (strain HTA426).